The primary structure comprises 378 residues: Trans-enoyl reductase poxP (378 aa).

Residue 62–65 (CDWK) coordinates NADP(+). A substrate-binding site is contributed by 151-158 (SVFATLWI). Residues 187-190 (STST), 210-213 (SPHN), tyrosine 228, and 275-276 (LE) each bind NADP(+). Position 295–299 (295–299 (GLAAS)) interacts with substrate. 364-365 (TS) lines the NADP(+) pocket.

Belongs to the zinc-containing alcohol dehydrogenase family. As to quaternary structure, monomer.

It participates in secondary metabolite biosynthesis. In terms of biological role, trans-enoyl reductase; part of the gene cluster that mediates the biosynthesis of oxaleimides, cytotoxic compounds containing an unusual disubstituted succinimide moiety. The first step of the pathway is provided by the HR-PKS poxF that serves in a new mode of collaborative biosynthesis with the PKS-NRPS poxE, by providing the olefin containing amino acid substrate via the synthesis of an ACP-bound dec-4-enoate. The cytochrome P450 monooxygenase poxM-catalyzed oxidation at the alpha-position creates the enzyme-bound 2-hydroxydec-4-enoyl-ACP thioester, which may be prone to spontaneous hydrolysis to yield 2-hydroxydec-4-enoic acid due to increased electrophilicity of the carbonyl. 2-hydroxydec-4-enoic acid can then be further oxidized by poxM to yield the alpha-ketoacid 2-oxodec-4-enoicacid, which is reductively aminated by the aminotransferase poxL to yield (S,E)-2-aminodec-4-enoic acid. The Hybrid PKS-NRPS synthetase poxE then performs condensation between the octaketide product of its PKS modules and the amino group of (S,E)-2-aminodec-4-enoic acid which is activated and incorporated by the adenylation domain. The resulting aminoacyl product can be cyclized by the Diels-Alderase PoxQ and reductively released by the reductive (R) domain of poxE to yield an aldehyde intermediate. The released aldehyde is then substrate for a Knoevenagel condensation by the hydrolyase poxO followed by an oxidation at the 5-position of the pyrrolidone ring. The presence of the olefin from the amino acid building block allows for migration of the substituted allyl group to occur. This allylic transposition reaction takes place in a conjugate addition, semipinacol-like fashion to yield a succinimide intermediate. Iterative two-electron oxidations of the C7 methyl of the succinimide intermediate to the carboxylic acid can be catalyzed by one of two remaining cytochrome P450 monooxygenasess poxC or poxD to yield oxaleimide A. Subsequent oxidation yields the maleimide scaffold oxaleimide I. Both oxaleimide A and oxaleimide I can undergo oxidative modifications in the decalin ring to yield the series of products oxaleimides B to H. The protein is Trans-enoyl reductase poxP of Penicillium oxalicum.